Reading from the N-terminus, the 86-residue chain is Putative antitoxin VapB36 (86 aa).

Functionally, possibly the antitoxin component of a type II toxin-antitoxin (TA) system. Its cognate toxin is VapC36 (Potential). The polypeptide is Putative antitoxin VapB36 (vapB36) (Mycobacterium tuberculosis (strain CDC 1551 / Oshkosh)).